A 483-amino-acid chain; its full sequence is NADH-quinone oxidoreductase subunit N (483 aa).

Helical transmembrane passes span 13-33 (PALP…YGVF), 45-65 (GALA…NAYV), 80-100 (FMKL…LTFI), 111-131 (PVLI…NGLI), 165-185 (FVLG…IYGF), 205-225 (IGVI…ISAV), 244-264 (AFFA…VLFV), 276-296 (IIVF…IGQS), 301-321 (LMAY…AAGT), 328-348 (VLIY…CILA), 373-393 (AFMM…AGFF), 407-429 (LYPL…LRIV), and 452-472 (VLGI…PLIL).

This sequence belongs to the complex I subunit 2 family. NDH-1 is composed of 14 different subunits. Subunits NuoA, H, J, K, L, M, N constitute the membrane sector of the complex.

It localises to the cell inner membrane. It carries out the reaction a quinone + NADH + 5 H(+)(in) = a quinol + NAD(+) + 4 H(+)(out). Its function is as follows. NDH-1 shuttles electrons from NADH, via FMN and iron-sulfur (Fe-S) centers, to quinones in the respiratory chain. The immediate electron acceptor for the enzyme in this species is believed to be ubiquinone. Couples the redox reaction to proton translocation (for every two electrons transferred, four hydrogen ions are translocated across the cytoplasmic membrane), and thus conserves the redox energy in a proton gradient. This chain is NADH-quinone oxidoreductase subunit N, found in Parvibaculum lavamentivorans (strain DS-1 / DSM 13023 / NCIMB 13966).